The following is a 769-amino-acid chain: Spastin (769 aa).

The tract at residues 1 to 100 (MVRTKNQSSS…TSGNVPRGGQ (100 aa)) is disordered. At 1–113 (MVRTKNQSSS…KQNLYVVSFP (113 aa)) the chain is on the cytoplasmic side. Residues 1–201 (MVRTKNQSSS…QTLEMAASRG (201 aa)) form a required for localization to punctate cytoplasmic foci region. The span at 8–19 (SSSSSASSSTKS) shows a compositional bias: low complexity. Gly residues predominate over residues 24 to 33 (SGGGGGGGGS). Polar residues predominate over residues 54–63 (SSKLSSNRQR). Residues 64-78 (TTTTITTTTTTPGSS) show a composition bias toward low complexity. The helical intramembrane region spans 114–134 (IIFLFNVLRSLIYQLFCIFRY). Over 135–769 (LYGASTKVIY…WSQDYGDITI (635 aa)) the chain is Cytoplasmic. Residues 199–769 (SRGGTGAGGY…WSQDYGDITI (571 aa)) are sufficient for interaction with microtubules and microtubule severing. The 76-residue stretch at 224–299 (HRRAFEYISK…SMARDRLHFL (76 aa)) folds into the MIT domain. Residues 314 to 462 (KEQPKKQLPH…NAASGSGSGA (149 aa)) form a disordered region. The segment covering 334–344 (TTTSSGSSSSS) has biased composition (low complexity). 2 stretches are compositionally biased toward polar residues: residues 395-413 (NKSQ…STSV) and 434-450 (QFSS…RTPI). Low complexity predominate over residues 451–462 (NNNAASGSGSGA). The required for interaction with microtubules stretch occupies residues 452–466 (NNAASGSGSGASTPL). 534–541 (GPPGNGKT) is a binding site for ATP.

This sequence belongs to the AAA ATPase family. Spastin subfamily. As to quaternary structure, homohexamer. The homohexamer is stabilized by ATP-binding. The homohexamer may adopt a ring conformation through which microtubules pass prior to being severed. Interacts with microtubules. Interacts with atl; may be involved in microtubule dynamics.

The protein localises to the membrane. The protein resides in the cytoplasm. Its subcellular location is the cytoskeleton. It is found in the microtubule organizing center. It localises to the centrosome. The protein localises to the chromosome. The protein resides in the lipid droplet. It catalyses the reaction n ATP + n H2O + a microtubule = n ADP + n phosphate + (n+1) alpha/beta tubulin heterodimers.. ATP-dependent microtubule severing protein. Stimulates microtubule minus-end depolymerization and poleward microtubule flux in the mitotic spindle. Regulates microtubule stability in the neuromuscular junction synapse. Involved in lipid metabolism by regulating the size and distribution of lipid droplets. Involved in axon regeneration by regulating microtubule severing. The chain is Spastin from Drosophila virilis (Fruit fly).